Reading from the N-terminus, the 430-residue chain is 3-phosphoshikimate 1-carboxyvinyltransferase (430 aa).

3-phosphoshikimate contacts are provided by lysine 25, serine 26, and arginine 30. Phosphoenolpyruvate is bound at residue lysine 25. Residues glycine 97 and arginine 125 each coordinate phosphoenolpyruvate. Serine 170, glutamine 172, aspartate 318, and lysine 345 together coordinate 3-phosphoshikimate. Residue glutamine 172 coordinates phosphoenolpyruvate. Aspartate 318 functions as the Proton acceptor in the catalytic mechanism. Residues arginine 349 and arginine 391 each contribute to the phosphoenolpyruvate site.

The protein belongs to the EPSP synthase family. In terms of assembly, monomer.

The protein resides in the cytoplasm. The enzyme catalyses 3-phosphoshikimate + phosphoenolpyruvate = 5-O-(1-carboxyvinyl)-3-phosphoshikimate + phosphate. It functions in the pathway metabolic intermediate biosynthesis; chorismate biosynthesis; chorismate from D-erythrose 4-phosphate and phosphoenolpyruvate: step 6/7. Its function is as follows. Catalyzes the transfer of the enolpyruvyl moiety of phosphoenolpyruvate (PEP) to the 5-hydroxyl of shikimate-3-phosphate (S3P) to produce enolpyruvyl shikimate-3-phosphate and inorganic phosphate. In Shouchella clausii (strain KSM-K16) (Alkalihalobacillus clausii), this protein is 3-phosphoshikimate 1-carboxyvinyltransferase.